The chain runs to 221 residues: 7-cyano-7-deazaguanine synthase (221 aa).

Residue Leu-8–Ile-18 participates in ATP binding. Zn(2+)-binding residues include Cys-186, Cys-196, Cys-199, and Cys-202.

Belongs to the QueC family. The cofactor is Zn(2+).

The catalysed reaction is 7-carboxy-7-deazaguanine + NH4(+) + ATP = 7-cyano-7-deazaguanine + ADP + phosphate + H2O + H(+). It participates in purine metabolism; 7-cyano-7-deazaguanine biosynthesis. In terms of biological role, catalyzes the ATP-dependent conversion of 7-carboxy-7-deazaguanine (CDG) to 7-cyano-7-deazaguanine (preQ(0)). The sequence is that of 7-cyano-7-deazaguanine synthase from Stenotrophomonas maltophilia (strain K279a).